A 335-amino-acid polypeptide reads, in one-letter code: Beta-ketoacyl-[acyl-carrier-protein] synthase III (335 aa).

Active-site residues include Cys119 and His261. Positions 262–266 (QANQR) are ACP-binding. Asn291 is an active-site residue.

Belongs to the thiolase-like superfamily. FabH family. As to quaternary structure, homodimer.

It localises to the cytoplasm. It catalyses the reaction malonyl-[ACP] + acetyl-CoA + H(+) = 3-oxobutanoyl-[ACP] + CO2 + CoA. It functions in the pathway lipid metabolism; fatty acid biosynthesis. Catalyzes the condensation reaction of fatty acid synthesis by the addition to an acyl acceptor of two carbons from malonyl-ACP. Catalyzes the first condensation reaction which initiates fatty acid synthesis and may therefore play a role in governing the total rate of fatty acid production. Possesses both acetoacetyl-ACP synthase and acetyl transacylase activities. Its substrate specificity determines the biosynthesis of branched-chain and/or straight-chain of fatty acids. The sequence is that of Beta-ketoacyl-[acyl-carrier-protein] synthase III from Prochlorococcus marinus (strain MIT 9301).